Reading from the N-terminus, the 67-residue chain is SPbeta prophage-derived uncharacterized protein YoqF (67 aa).

The polypeptide is SPbeta prophage-derived uncharacterized protein YoqF (yoqF) (Bacillus subtilis (strain 168)).